A 295-amino-acid polypeptide reads, in one-letter code: Protease HtpX (295 aa).

The next 2 helical transmembrane spans lie at 4–24 (ILLFVATNLAVVLVASITLSL) and 41–61 (SSLLVFCAVFGFAGSLVSLFI). A Zn(2+)-binding site is contributed by histidine 147. The active site involves glutamate 148. Histidine 151 lines the Zn(2+) pocket. 2 helical membrane-spanning segments follow: residues 158–178 (VTLALVQGVVNTFVMFFARII) and 199–219 (VATIVAELILGILASMIVMWF). Position 224 (glutamate 224) interacts with Zn(2+).

The protein belongs to the peptidase M48B family. Zn(2+) is required as a cofactor.

It is found in the cell inner membrane. The protein is Protease HtpX of Pseudomonas putida (strain GB-1).